A 112-amino-acid polypeptide reads, in one-letter code: UPF0060 membrane protein IL2332 (112 aa).

4 consecutive transmembrane segments (helical) span residues 10-30 (LGLF…PYLW), 36-56 (SAWL…LLTL), 64-84 (VYAA…KAVE), and 90-110 (TYDA…AVGW).

Belongs to the UPF0060 family.

It is found in the cell inner membrane. The chain is UPF0060 membrane protein IL2332 from Idiomarina loihiensis (strain ATCC BAA-735 / DSM 15497 / L2-TR).